Consider the following 115-residue polypeptide: MSRVKRGNVARKRRNKILRLAKGFQGSNGSLFRTANQRVMKALCNAYRDRKRRKRDFRRLWIARINAAARMNGMSYSKLIGNLKKADIRINRKMLAQIAILDPTNFQKVVADVKK.

This sequence belongs to the bacterial ribosomal protein bL20 family.

Its function is as follows. Binds directly to 23S ribosomal RNA and is necessary for the in vitro assembly process of the 50S ribosomal subunit. It is not involved in the protein synthesizing functions of that subunit. This Prochlorococcus marinus (strain SARG / CCMP1375 / SS120) protein is Large ribosomal subunit protein bL20.